Here is a 224-residue protein sequence, read N- to C-terminus: Heme response regulator HssR (224 aa).

Residues 3–116 (QCLVVDDDPR…ELIFRIRAVL (114 aa)) enclose the Response regulatory domain. D52 is modified (4-aspartylphosphate). Positions 124–222 (NSEMTIGNLT…VRGQGYKVEN (99 aa)) form a DNA-binding region, ompR/PhoB-type.

Post-translationally, phosphorylated by HssS.

It is found in the cytoplasm. In terms of biological role, member of the two-component regulatory system HssS/HssR involved in intracellular heme homeostasis and tempering of staphylococcal virulence. Phosphorylated HssR binds to a direct repeat sequence within hrtAB promoter and activates the expression of hrtAB, an efflux pump, in response to extracellular heme, hemin, hemoglobin or blood. The polypeptide is Heme response regulator HssR (hssR) (Staphylococcus aureus (strain COL)).